A 67-amino-acid polypeptide reads, in one-letter code: MDIVDIRSKTSDELRELLASLRKELVDAVLNRKIDKSGNHFYCVNIKRDIARVLTVLNERKKEERHV.

Belongs to the universal ribosomal protein uL29 family.

This is Large ribosomal subunit protein uL29 from Ehrlichia canis (strain Jake).